The sequence spans 597 residues: Elongation factor 4 (597 aa).

The 183-residue stretch at 2–184 folds into the tr-type G domain; sequence KNIRNFSIIA…EVVNKIPPPK (183 aa). GTP-binding positions include 14–19 and 131–134; these read DHGKST and NKID.

It belongs to the TRAFAC class translation factor GTPase superfamily. Classic translation factor GTPase family. LepA subfamily.

It is found in the cell inner membrane. It catalyses the reaction GTP + H2O = GDP + phosphate + H(+). Functionally, required for accurate and efficient protein synthesis under certain stress conditions. May act as a fidelity factor of the translation reaction, by catalyzing a one-codon backward translocation of tRNAs on improperly translocated ribosomes. Back-translocation proceeds from a post-translocation (POST) complex to a pre-translocation (PRE) complex, thus giving elongation factor G a second chance to translocate the tRNAs correctly. Binds to ribosomes in a GTP-dependent manner. The polypeptide is Elongation factor 4 (Chromobacterium violaceum (strain ATCC 12472 / DSM 30191 / JCM 1249 / CCUG 213 / NBRC 12614 / NCIMB 9131 / NCTC 9757 / MK)).